A 392-amino-acid chain; its full sequence is Basic salivary proline-rich protein 1 (392 aa).

Positions 1 to 16 are cleaved as a signal peptide; it reads MLLILLSVALLALSSA. Pyrrolidone carboxylic acid is present on glutamine 17. Positions 19–28 are enriched in polar residues; it reads LNEDVSQEES. The interval 19-392 is disordered; that stretch reads LNEDVSQEES…QGGRPSRPPQ (374 aa). The segment covering 34–47 has biased composition (low complexity); sequence GNPQGPSPQGGNKP. Serine 40 is subject to Phosphoserine; alternate. A glycan (O-linked (Hex) serine; alternate) is linked at serine 40. Residues 48–83 are compositionally biased toward pro residues; it reads QGPPPPPGKPQGPPPQGGNKPQGPPPPGKPQGPPPQ. Tandem repeats lie at residues 53–72, 73–92, 93–112, 114–133, 134–153, 154–173, 175–194, 195–214, 215–234, 236–255, 256–275, 276–295, 297–316, 317–336, and 338–357. The segment at 53–357 is 15 X 20 AA approximate tandem repeats of P-P-G-K-P-Q-G-P-P-[PAQ]-Q-[GE]-[GD]-[NKS]-[KSQRN]-[PRQS]-[QS] [GPS]-[PQAR]-[PSR]; sequence PPGKPQGPPP…QEGNNPQGPP (305 aa). Serine 87 carries an O-linked (HexNAc...) serine glycan. A compositionally biased stretch (pro residues) spans 91–144; sequence RSPPGKPQGPPPQGGNQPQGPPPPPGKPQGPPPQGGNKPQGPPPPGKPQGPPPQ. Serine 92 bears the Phosphoserine mark. A Phosphoserine; alternate modification is found at serine 150. O-linked (Hex) serine; alternate glycosylation occurs at serine 150. Composition is skewed to pro residues over residues 152–205, 213–243, 252–266, and 274–324; these read RSPP…PPPQ, RSPP…PQGP, QGPP…PPPQ, and QSPP…PQGP. Residues 325–334 are compositionally biased toward low complexity; the sequence is PAQGGSKSQS. The O-linked (HexNAc...) serine glycan is linked to serine 330. Over residues 354-392 the composition is skewed to pro residues; the sequence is QGPPPPAGGNPQQPQAPPAGQPQGPPRPPQGGRPSRPPQ.

Post-translationally, O-glycosylated. O-glycosylation on Ser-87 is prevalent in head and neck cancer patients. O-Glycosylation on Ser-330 has a 5 times prevalence in head and neck cancers. Proteolytically cleaved at the tripeptide Xaa-Pro-Gln, where Xaa in the P(3) position is mostly lysine. The endoprotease may be of microbial origin. In terms of processing, pyroglutamate formation occurs on terminal Gln residues of cleaved peptides. Besides on the N-terminal of mature PBR1, pyroglutamate formation found on at least Gln-58.

The protein localises to the secreted. This Homo sapiens (Human) protein is Basic salivary proline-rich protein 1 (PRB1).